The chain runs to 367 residues: GTP cyclohydrolase FolE2 (367 aa).

It belongs to the GTP cyclohydrolase IV family.

The catalysed reaction is GTP + H2O = 7,8-dihydroneopterin 3'-triphosphate + formate + H(+). Its pathway is cofactor biosynthesis; 7,8-dihydroneopterin triphosphate biosynthesis; 7,8-dihydroneopterin triphosphate from GTP: step 1/1. In terms of biological role, converts GTP to 7,8-dihydroneopterin triphosphate. The protein is GTP cyclohydrolase FolE2 of Roseobacter denitrificans (strain ATCC 33942 / OCh 114) (Erythrobacter sp. (strain OCh 114)).